The chain runs to 380 residues: Chaperone protein DnaJ (380 aa).

The disordered stretch occupies residues 1 to 48 (MAKKDYYDTLGVPKNASDDDIKKAYRKLAMKHHPDRNQGDKSKVSEEK). The J domain maps to 5–72 (DYYDTLGVPK…NKRMAYDQYG (68 aa)). Basic residues predominate over residues 24-34 (AYRKLAMKHHP). Over residues 35–48 (DRNQGDKSKVSEEK) the composition is skewed to basic and acidic residues. The segment at 139–217 (GKEAQIRIPS…CHGVGKTKNN (79 aa)) adopts a CR-type zinc-finger fold. Residues C152, C155, C169, C172, C191, C194, C205, and C208 each contribute to the Zn(2+) site. CXXCXGXG motif repeat units follow at residues 152-159 (CNTCHGSG), 169-176 (CTTCHGHG), 191-198 (CPQCKGTG), and 205-212 (CVACHGVG). A disordered region spans residues 357-380 (KKGGARHSPSEEGWADKLKSFFSA). A compositionally biased stretch (basic and acidic residues) spans 364 to 380 (SPSEEGWADKLKSFFSA).

This sequence belongs to the DnaJ family. Homodimer. Zn(2+) serves as cofactor.

Its subcellular location is the cytoplasm. Functionally, participates actively in the response to hyperosmotic and heat shock by preventing the aggregation of stress-denatured proteins and by disaggregating proteins, also in an autonomous, DnaK-independent fashion. Unfolded proteins bind initially to DnaJ; upon interaction with the DnaJ-bound protein, DnaK hydrolyzes its bound ATP, resulting in the formation of a stable complex. GrpE releases ADP from DnaK; ATP binding to DnaK triggers the release of the substrate protein, thus completing the reaction cycle. Several rounds of ATP-dependent interactions between DnaJ, DnaK and GrpE are required for fully efficient folding. Also involved, together with DnaK and GrpE, in the DNA replication of plasmids through activation of initiation proteins. The protein is Chaperone protein DnaJ of Polaromonas sp. (strain JS666 / ATCC BAA-500).